The chain runs to 160 residues: Cytochrome b6-f complex subunit 4 (160 aa).

Transmembrane regions (helical) follow at residues 36–56 (LLYT…GLAV), 95–115 (LLGI…PFIE), and 127–147 (PIAM…GVAA).

Belongs to the cytochrome b family. PetD subfamily. As to quaternary structure, the 4 large subunits of the cytochrome b6-f complex are cytochrome b6, subunit IV (17 kDa polypeptide, PetD), cytochrome f and the Rieske protein, while the 4 small subunits are PetG, PetL, PetM and PetN. The complex functions as a dimer.

It is found in the cellular thylakoid membrane. Functionally, component of the cytochrome b6-f complex, which mediates electron transfer between photosystem II (PSII) and photosystem I (PSI), cyclic electron flow around PSI, and state transitions. This is Cytochrome b6-f complex subunit 4 from Prochlorothrix hollandica.